Here is an 88-residue protein sequence, read N- to C-terminus: Apolipoprotein C-I (88 aa).

The N-terminal stretch at 1–26 (MRLFLSLPVLVVVLAMVLEGPAPAQA) is a signal peptide.

Belongs to the apolipoprotein C1 family.

Its subcellular location is the secreted. Functionally, inhibitor of lipoprotein binding to the low density lipoprotein (LDL) receptor, LDL receptor-related protein, and very low density lipoprotein (VLDL) receptor. Associates with high density lipoproteins (HDL) and the triacylglycerol-rich lipoproteins in the plasma and makes up about 10% of the protein of the VLDL and 2% of that of HDL. Appears to interfere directly with fatty acid uptake and is also the major plasma inhibitor of cholesteryl ester transfer protein (CETP). Binds free fatty acids and reduces their intracellular esterification. Modulates the interaction of APOE with beta-migrating VLDL and inhibits binding of beta-VLDL to the LDL receptor-related protein. This chain is Apolipoprotein C-I (APOC1), found in Arctocephalus gazella (Antarctic fur seal).